The following is a 316-amino-acid chain: Pantothenate kinase (316 aa).

96–103 is an ATP binding site; it reads GSVAVGKS.

The protein belongs to the prokaryotic pantothenate kinase family.

It is found in the cytoplasm. It carries out the reaction (R)-pantothenate + ATP = (R)-4'-phosphopantothenate + ADP + H(+). Its pathway is cofactor biosynthesis; coenzyme A biosynthesis; CoA from (R)-pantothenate: step 1/5. In Shouchella clausii (strain KSM-K16) (Alkalihalobacillus clausii), this protein is Pantothenate kinase.